Consider the following 596-residue polypeptide: Arginine--tRNA ligase (596 aa).

The 'HIGH' region motif lies at 128 to 138 (ANPTSSLHVGH).

It belongs to the class-I aminoacyl-tRNA synthetase family. As to quaternary structure, monomer.

Its subcellular location is the cytoplasm. The catalysed reaction is tRNA(Arg) + L-arginine + ATP = L-arginyl-tRNA(Arg) + AMP + diphosphate. The sequence is that of Arginine--tRNA ligase from Acinetobacter baumannii (strain SDF).